We begin with the raw amino-acid sequence, 60 residues long: Toxin TdNa2 (60 aa).

An LCN-type CS-alpha/beta domain is found at 1–59; the sequence is RDAYPADWRGCKPSCPWGSSSWCNEECTSLGGSSGYCAWPACWCYGLPDSVRYYNNKCH. Cystine bridges form between Cys11–Cys58, Cys15–Cys37, Cys23–Cys42, and Cys27–Cys44.

The protein belongs to the long (4 C-C) scorpion toxin superfamily. Sodium channel inhibitor family. Beta subfamily. In terms of tissue distribution, expressed by the venom gland.

The protein resides in the secreted. Inhibits the sodium currents (Nav) in an apparent irreversible manner. Produces small depolarization and induces repetitive firing in squid axons. Is specific for arthropods (crickets, triatomides, crabs and squids), but is non-toxic to mice. This Tityus discrepans (Venezuelan scorpion) protein is Toxin TdNa2.